A 201-amino-acid chain; its full sequence is MKLQVQDTKKDLEVSDQTFGREFNEDLVHQAVVAYMAGGRAGTKAQKGRSDVSGGGAKPWKQKGSGRARAGTIRSPIWRTGGKVFAARPRDYSQKLNRKMYRAAMRSIFSELVRQERLVVVDSFAVDAPKTKGLLEKLGGLGVSNALIVTDQADANLYLSARNLPGVDVSEVGGLDPVSLVGFEKVLITVPALKQVEEWLA.

Residues 43-69 (TKAQKGRSDVSGGGAKPWKQKGSGRAR) form a disordered region.

It belongs to the universal ribosomal protein uL4 family. Part of the 50S ribosomal subunit.

In terms of biological role, one of the primary rRNA binding proteins, this protein initially binds near the 5'-end of the 23S rRNA. It is important during the early stages of 50S assembly. It makes multiple contacts with different domains of the 23S rRNA in the assembled 50S subunit and ribosome. Forms part of the polypeptide exit tunnel. The sequence is that of Large ribosomal subunit protein uL4 from Thioalkalivibrio sulfidiphilus (strain HL-EbGR7).